Here is a 274-residue protein sequence, read N- to C-terminus: Bis(5'-nucleosyl)-tetraphosphatase, symmetrical (274 aa).

It belongs to the Ap4A hydrolase family.

It carries out the reaction P(1),P(4)-bis(5'-adenosyl) tetraphosphate + H2O = 2 ADP + 2 H(+). Hydrolyzes diadenosine 5',5'''-P1,P4-tetraphosphate to yield ADP. The sequence is that of Bis(5'-nucleosyl)-tetraphosphatase, symmetrical from Shewanella sediminis (strain HAW-EB3).